The primary structure comprises 194 residues: UPF0215 protein DR_A0167 (194 aa).

The protein belongs to the UPF0215 family.

This Deinococcus radiodurans (strain ATCC 13939 / DSM 20539 / JCM 16871 / CCUG 27074 / LMG 4051 / NBRC 15346 / NCIMB 9279 / VKM B-1422 / R1) protein is UPF0215 protein DR_A0167.